An 856-amino-acid chain; its full sequence is Increased rDNA silencing protein 4 (856 aa).

3 disordered regions span residues 1 to 204 (MSAS…EPKS), 230 to 563 (KQEE…PTPE), and 589 to 672 (TSLE…DEDL). 3 stretches are compositionally biased toward low complexity: residues 12-42 (GPAS…ATLA), 67-84 (VPTP…RTVG), and 111-130 (SRVV…AGRT). Over residues 152-162 (HVEERANDHAP) the composition is skewed to basic and acidic residues. The segment covering 194 to 204 (ASAKPSSEPKS) has biased composition (low complexity). The span at 239-254 (KKKKKKKPRPASKTQH) shows a compositional bias: basic residues. Composition is skewed to polar residues over residues 255 to 275 (HQTL…ENQC) and 303 to 315 (SLST…SSTG). Residues 329-347 (GETRNRNGDVRDKPSREGG) are compositionally biased toward basic and acidic residues. Polar residues-rich tracts occupy residues 396–410 (PVSQ…TIIS), 451–468 (RVVS…QSAE), and 478–488 (RNSTSSDETFV). Residues 503–514 (KELERVRPRLDR) show a composition bias toward basic and acidic residues. The span at 517 to 535 (TSTSSRASRVSTPASVRSP) shows a compositional bias: low complexity. The segment covering 603 to 620 (RRGHRHHHLPHPHLRHRT) has biased composition (basic residues). Residues 644 to 654 (PSRQTEHTQPA) are compositionally biased toward polar residues. The region spanning 743-832 (DSLGQVDLSR…EGVWESAMDR (90 aa)) is the EH domain.

Belongs to the IRS4 family.

In terms of biological role, positive regulator of phosphatidylinositol 4,5-bisphosphate turnover and negatively regulates signaling through the cell integrity pathway. Involved in rDNA silencing. The protein is Increased rDNA silencing protein 4 (irs-4) of Neurospora crassa (strain ATCC 24698 / 74-OR23-1A / CBS 708.71 / DSM 1257 / FGSC 987).